The following is a 296-amino-acid chain: tRNA dimethylallyltransferase (296 aa).

Residue 2–9 (GPTASGKT) coordinates ATP. A substrate-binding site is contributed by 4–9 (TASGKT). Interaction with substrate tRNA stretches follow at residues 27-30 (DSAL), 151-155 (QRLSR), and 232-237 (RCVGYR).

This sequence belongs to the IPP transferase family. As to quaternary structure, monomer. It depends on Mg(2+) as a cofactor.

The catalysed reaction is adenosine(37) in tRNA + dimethylallyl diphosphate = N(6)-dimethylallyladenosine(37) in tRNA + diphosphate. In terms of biological role, catalyzes the transfer of a dimethylallyl group onto the adenine at position 37 in tRNAs that read codons beginning with uridine, leading to the formation of N6-(dimethylallyl)adenosine (i(6)A). This chain is tRNA dimethylallyltransferase, found in Shewanella sp. (strain ANA-3).